The following is a 405-amino-acid chain: Phosphopentomutase (405 aa).

Mn(2+) is bound by residues D10, D303, H308, D344, H345, and H356.

The protein belongs to the phosphopentomutase family. Mn(2+) serves as cofactor.

It is found in the cytoplasm. The enzyme catalyses 2-deoxy-alpha-D-ribose 1-phosphate = 2-deoxy-D-ribose 5-phosphate. The catalysed reaction is alpha-D-ribose 1-phosphate = D-ribose 5-phosphate. It functions in the pathway carbohydrate degradation; 2-deoxy-D-ribose 1-phosphate degradation; D-glyceraldehyde 3-phosphate and acetaldehyde from 2-deoxy-alpha-D-ribose 1-phosphate: step 1/2. In terms of biological role, isomerase that catalyzes the conversion of deoxy-ribose 1-phosphate (dRib-1-P) and ribose 1-phosphate (Rib-1-P) to deoxy-ribose 5-phosphate (dRib-5-P) and ribose 5-phosphate (Rib-5-P), respectively. This is Phosphopentomutase from Shewanella sediminis (strain HAW-EB3).